Here is a 423-residue protein sequence, read N- to C-terminus: Serine--tRNA ligase (423 aa).

L-serine is bound at residue 230-232 (TAE). 261-263 (RSE) contributes to the ATP binding site. Residue Glu284 participates in L-serine binding. 348-351 (EISS) lines the ATP pocket. Ser384 is a binding site for L-serine.

It belongs to the class-II aminoacyl-tRNA synthetase family. Type-1 seryl-tRNA synthetase subfamily. In terms of assembly, homodimer. The tRNA molecule binds across the dimer.

Its subcellular location is the cytoplasm. The catalysed reaction is tRNA(Ser) + L-serine + ATP = L-seryl-tRNA(Ser) + AMP + diphosphate + H(+). It catalyses the reaction tRNA(Sec) + L-serine + ATP = L-seryl-tRNA(Sec) + AMP + diphosphate + H(+). It participates in aminoacyl-tRNA biosynthesis; selenocysteinyl-tRNA(Sec) biosynthesis; L-seryl-tRNA(Sec) from L-serine and tRNA(Sec): step 1/1. Catalyzes the attachment of serine to tRNA(Ser). Is also able to aminoacylate tRNA(Sec) with serine, to form the misacylated tRNA L-seryl-tRNA(Sec), which will be further converted into selenocysteinyl-tRNA(Sec). This is Serine--tRNA ligase from Syntrophobacter fumaroxidans (strain DSM 10017 / MPOB).